The following is a 543-amino-acid chain: MASPGLPQPPTEDAAWPLRLLHAPPGLLRLDPTGGALLLLVLAALLGWSWLWRLPERGIPPGPAPWPVVGNFGFVLLPRFLRRKSWPYRRARNGGMNASGQGVQLLLADLGRVYGNIFSFLIGHYLVVVLNDFHSVREALVQQAEVFSDRPRVPLTSIMTKGKGIVFAHYGPVWRQQRKFSHSTLRHFGLGKLSLEPKIIEEFRYVKEEMQKHGDAPFNPFPIVNNAVSNIICSLCFGRRFDYTNSEFKQMLNFMSRALEVCLNTQLLLVNICSWLYYLPFGPFKELRQIEKDLTLFLKKIIKDHRESLDVENPQDFIDMYLLHVEEEKKNNSNSGFDEDYLFYIIGDLFIAGTDTTTNSLLWCLLYMSLHPNIQEKIHEEIARVIGADRAPSLTDKAQMPYTEATIMEVQRLSTVVPLSIPHMTSEKTVLQGFTIPKGTIILPNLWSVHRDPAIWEKPNDFYPDRFLDDQGQLIKKETFIPFGIGKRVCMGEQLAKMELFLMFVSLMQSFTFVLPKDSKPILTGKYGLTLAPHPFNIIISKR.

Helical transmembrane passes span 32–52, 58–78, 261–281, and 342–362; these read PTGGALLLLVLAALLGWSWLW, GIPPGPAPWPVVGNFGFVLLP, VCLNTQLLLVNICSWLYYLPF, and LFYIIGDLFIAGTDTTTNSLL. A heme-binding site is contributed by Cys-490. Residues 495–515 form a helical membrane-spanning segment; that stretch reads LAKMELFLMFVSLMQSFTFVL.

Belongs to the cytochrome P450 family. It depends on heme as a cofactor.

The protein resides in the endoplasmic reticulum membrane. The protein localises to the microsome membrane. It is found in the mitochondrion inner membrane. The enzyme catalyses an omega-methyl-long-chain fatty acid + reduced [NADPH--hemoprotein reductase] + O2 = an omega-hydroxy-long-chain fatty acid + oxidized [NADPH--hemoprotein reductase] + H2O + H(+). It catalyses the reaction (5Z,8Z,11Z,14Z)-eicosatetraenoate + reduced [NADPH--hemoprotein reductase] + O2 = 19-hydroxy-(5Z,8Z,11Z,14Z)-eicosatetraenoate + oxidized [NADPH--hemoprotein reductase] + H2O + H(+). The catalysed reaction is (5Z,8Z,11Z,14Z)-eicosatetraenoate + reduced [NADPH--hemoprotein reductase] + O2 = 20-hydroxy-(5Z,8Z,11Z,14Z)-eicosatetraenoate + oxidized [NADPH--hemoprotein reductase] + H2O + H(+). It carries out the reaction N-[(5Z,8Z,11Z,14Z)-eicosatetraenoyl]-serotonin + reduced [NADPH--hemoprotein reductase] + O2 = 2-oxo-N-[(5Z,8Z,11Z,14Z)-eicosatetraenoyl]-serotonin + oxidized [NADPH--hemoprotein reductase] + H2O + H(+). In terms of biological role, a cytochrome P450 monooxygenase involved in the metabolism of arachidonic acid and its conjugates. Mechanistically, uses molecular oxygen inserting one oxygen atom into a substrate, and reducing the second into a water molecule, with two electrons provided by NADPH via cytochrome P450 reductase (CPR; NADPH-ferrihemoprotein reductase). Acts as an omega and omega-1 hydroxylase for arachidonic acid and possibly for other long chain fatty acids. May modulate the arachidonic acid signaling pathway and play a role in other fatty acid signaling processes. May down-regulate the biological activities of N-arachidonoyl-serotonin, an endocannabinoid that has anti-nociceptive effects through inhibition of fatty acid amide hydrolase FAAH, TRPV1 receptor and T-type calcium channels. Catalyzes C-2 oxidation of the indole ring of N-arachidonoyl-serotonin forming a less active product 2-oxo-N-arachidonoyl-serotonin. The sequence is that of Cytochrome P450 2U1 (CYP2U1) from Bos taurus (Bovine).